The chain runs to 317 residues: 2,3-dihydroxyphenylpropionate/2,3-dihydroxicinnamic acid 1,2-dioxygenase (317 aa).

His115 functions as the Proton donor in the catalytic mechanism. Catalysis depends on His179, which acts as the Proton acceptor.

Belongs to the LigB/MhpB extradiol dioxygenase family. As to quaternary structure, homotetramer. It depends on Fe(2+) as a cofactor.

The catalysed reaction is 3-(2,3-dihydroxyphenyl)propanoate + O2 = (2Z,4E)-2-hydroxy-6-oxonona-2,4-dienedioate + H(+). It catalyses the reaction (2E)-3-(2,3-dihydroxyphenyl)prop-2-enoate + O2 = (2Z,4E,7E)-2-hydroxy-6-oxonona-2,4,7-trienedioate + H(+). It participates in aromatic compound metabolism; 3-phenylpropanoate degradation. Functionally, catalyzes the non-heme iron(II)-dependent oxidative cleavage of 2,3-dihydroxyphenylpropionic acid and 2,3-dihydroxicinnamic acid into 2-hydroxy-6-ketononadienedioate and 2-hydroxy-6-ketononatrienedioate, respectively. In Photorhabdus laumondii subsp. laumondii (strain DSM 15139 / CIP 105565 / TT01) (Photorhabdus luminescens subsp. laumondii), this protein is 2,3-dihydroxyphenylpropionate/2,3-dihydroxicinnamic acid 1,2-dioxygenase.